The sequence spans 243 residues: Urease accessory protein UreF 2 (243 aa).

It belongs to the UreF family. UreD, UreF and UreG form a complex that acts as a GTP-hydrolysis-dependent molecular chaperone, activating the urease apoprotein by helping to assemble the nickel containing metallocenter of UreC. The UreE protein probably delivers the nickel.

It is found in the cytoplasm. Its function is as follows. Required for maturation of urease via the functional incorporation of the urease nickel metallocenter. The polypeptide is Urease accessory protein UreF 2 (Brucella suis (strain ATCC 23445 / NCTC 10510)).